A 200-amino-acid polypeptide reads, in one-letter code: Probable GTP-binding protein EngB (200 aa).

One can recognise an EngB-type G domain in the interval 22-197 (NLPEYAFIGR…LDYIDSINRS (176 aa)). Residues 30–37 (GRSNVGKS), 57–61 (GKTLL), 75–78 (DLPG), 142–145 (TKAD), and 173–178 (HFVSSS) contribute to the GTP site. Serine 37 and threonine 59 together coordinate Mg(2+).

It belongs to the TRAFAC class TrmE-Era-EngA-EngB-Septin-like GTPase superfamily. EngB GTPase family. Requires Mg(2+) as cofactor.

In terms of biological role, necessary for normal cell division and for the maintenance of normal septation. In Phocaeicola vulgatus (strain ATCC 8482 / DSM 1447 / JCM 5826 / CCUG 4940 / NBRC 14291 / NCTC 11154) (Bacteroides vulgatus), this protein is Probable GTP-binding protein EngB.